A 473-amino-acid chain; its full sequence is GTPase Der (473 aa).

EngA-type G domains are found at residues 3–167 (LTIA…GKDK) and 204–379 (IRIA…RIWN). GTP-binding positions include 9–16 (GRPNVGKS), 56–60 (DTAGL), 119–122 (NKSE), 210–217 (GRPNTGKS), 257–261 (DTAGL), and 322–325 (NKWD). Residues 380-464 (RRISTGKLNR…PIRLSLRTSD (85 aa)) form the KH-like domain.

Belongs to the TRAFAC class TrmE-Era-EngA-EngB-Septin-like GTPase superfamily. EngA (Der) GTPase family. Associates with the 50S ribosomal subunit.

Functionally, GTPase that plays an essential role in the late steps of ribosome biogenesis. This chain is GTPase Der, found in Bartonella bacilliformis (strain ATCC 35685 / KC583 / Herrer 020/F12,63).